A 173-amino-acid chain; its full sequence is Putative metal-dependent hydrolase BcerKBAB4_2443 (173 aa).

Zn(2+) contacts are provided by H65, H156, and H160.

Belongs to the metal hydrolase YfiT family. Homodimer. Zn(2+) is required as a cofactor.

Its subcellular location is the cytoplasm. Possible metal-dependent hydrolase. This is Putative metal-dependent hydrolase BcerKBAB4_2443 from Bacillus mycoides (strain KBAB4) (Bacillus weihenstephanensis).